Here is a 603-residue protein sequence, read N- to C-terminus: Matrix metalloproteinase-17 (603 aa).

The N-terminal stretch at 1-35 (MRRRAARGPGPPPPGPGLSRLPLPLLLLLALGTRG) is a signal peptide. Positions 36-125 (GCAAPAPAPR…PVLTQARRRR (90 aa)) are excised as a propeptide. The short motif at 108-115 (PRCSLPDL) is the Cysteine switch element. Cys110 contributes to the Zn(2+) binding site. An N-linked (GlcNAc...) asparagine glycan is attached at Asn137. His248 lines the Zn(2+) pocket. The active site involves Glu249. Residues His252 and His258 each coordinate Zn(2+). Positions 301–329 (SPTAQPEEPPLLPEPPDNRSSAPPRKDVP) are disordered. Asn318 is a glycosylation site (N-linked (GlcNAc...) asparagine). Cysteines 332 and 523 form a disulfide. Hemopexin repeat units follow at residues 333–378 (STHF…WRGL), 382–427 (LDSV…FSLP), 428–475 (PGGI…WRGV), and 476–523 (PSTL…WLVC). A disordered region spans residues 537–571 (DAAEGPRAPPGQHDQSRSEDGYEVCSCTSGASSPP). Residue Ser565 is the site of GPI-anchor amidated serine attachment. Positions 566-603 (GASSPPGAPGPLVAATMLLLLPPLSPGALWTAAQALTL) are cleaved as a propeptide — removed in mature form.

Belongs to the peptidase M10A family. Requires Zn(2+) as cofactor. The cofactor is Ca(2+). In terms of processing, the precursor is cleaved by a furin endopeptidase. As to expression, expressed in brain, leukocytes, colon, ovary testis and breast cancer. Expressed also in many transformed and non-transformed cell types.

The protein localises to the cell membrane. Its subcellular location is the secreted. It localises to the extracellular space. It is found in the extracellular matrix. In terms of biological role, endopeptidase that degrades various components of the extracellular matrix, such as fibrin. May be involved in the activation of membrane-bound precursors of growth factors or inflammatory mediators, such as tumor necrosis factor-alpha. May also be involved in tumoral process. Cleaves pro-TNF-alpha at the '74-Ala-|-Gln-75' site. Not obvious if able to proteolytically activate progelatinase A. Does not hydrolyze collagen types I, II, III, IV and V, gelatin, fibronectin, laminin, decorin nor alpha1-antitrypsin. The protein is Matrix metalloproteinase-17 (MMP17) of Homo sapiens (Human).